The following is a 150-amino-acid chain: Troponin C, isoform 2A (150 aa).

At methionine 1 the chain carries N-acetylmethionine. EF-hand domains are found at residues 7-42 (EQIG…MGVK), 43-78 (ISEK…FLIE), 83-118 (ALKT…LDNR), and 119-150 (LTEE…MMNG). Aspartate 56, aspartate 58, serine 60, glutamate 62, and glutamate 67 together coordinate Ca(2+). Ca(2+)-binding residues include aspartate 132, aspartate 134, serine 136, threonine 138, and glutamate 143.

It belongs to the troponin C family.

Its function is as follows. Troponin is the central regulatory protein of striated muscle contraction. Tn consists of three components: Tn-I which is the inhibitor of actomyosin ATPase, Tn-T which contains the binding site for tropomyosin and Tn-C. The binding of calcium to Tn-C abolishes the inhibitory action of Tn on actin filaments. The sequence is that of Troponin C, isoform 2A from Homarus americanus (American lobster).